The chain runs to 525 residues: MATLLRSLALFKRNKDKPPITSGSGGAIRGIKHIIIVPIPGDSSITTRSRLLDRLVRLIGNPDVSGPKLTGALIGILSLFVESPGQLIQRITDDPDVSIRLLEVVQSDQSQSGLTFASRGTNMEDEADQYFSHDDPISSDQSRFGWFENKEISDIEVQDPEGFNMILGTILAQIWVLLAKAVTAPDTAADSELRRWIKYTQQRRVVGEFRLERKWLDVVRNIIAEDLSLRRFMVALILDIKRTPGNKPRIAEMICDIDTYIVEAGLASFILTIKFGIETMYPALGLHEFAGELSTLESLMNLYQQMGKPAPYMVNLENSIQNKFSAGSYPLLWSYAMGVGVELENSMGGLNFGRSYFDPAYFRLGQEMVRRSAGKVSSTLASELGITAEDARLVSEIAMHTTEDKISRAVGPRQAQVSFLQGDQSENELPRLGGKEDRRVKQSRGEARESYRETGPSRASDARAAHLPTGTPLDIDTASESSQDPQDSRRSAEPLLRLQAMAGISEEQGSDTDTPTVYNDRNLLD.

The homomultimerization stretch occupies residues 1-36; the sequence is MATLLRSLALFKRNKDKPPITSGSGGAIRGIKHIII. The segment at 1–375 is RNA packaging and organization of the helical nucleocapsid; sequence MATLLRSLAL…QEMVRRSAGK (375 aa). The ncore stretch occupies residues 1–403; the sequence is MATLLRSLAL…VSEIAMHTTE (403 aa). The short motif at 70 to 77 is the Nuclear localization signal element; it reads TGALIGIL. RNA is bound by residues Lys-180, Arg-195, Gln-202, and Tyr-260. Phosphothreonine; by host is present on Thr-279. Asn-351 lines the RNA pocket. Positions 373 to 391 are homomultimerization; sequence AGKVSSTLASELGITAEDA. A ntail region spans residues 404-525; it reads DKISRAVGPR…TVYNDRNLLD (122 aa). Residues 418-525 are disordered; that stretch reads SFLQGDQSEN…TVYNDRNLLD (108 aa). The short motif at 425 to 440 is the Nuclear export signal element; that stretch reads SENELPRLGGKEDRRV. Positions 433–452 are enriched in basic and acidic residues; the sequence is GGKEDRRVKQSRGEARESYR. Positions 477–505 are interaction with the phosphoprotein; the sequence is TASESSQDPQDSRRSAEPLLRLQAMAGIS.

The protein belongs to the paramyxoviruses nucleocapsid family. In terms of assembly, homomultimer; forms the nucleocapsid. Binds to viral genomic RNA. N0 interacts (via Ncore) with the phosphoprotein (via N-terminus); this interaction allows P to chaperon N0 to avoid N polymerization and non-specific RNA binding before encapsidation. Interacts as N-RNA template (via the Ntail) with the phosphoprotein (via C-terminus XD); this interaction maintains the P/L complex anchored to the nucleocapsid template during the sequential transcription. Interacts with the phosphoprotein; this interaction leads to the formation of membraneless organelles that function as viral replication factories. Interacts with human FCGR2B protein. Interacts with human PPIA/CYPA and PPIB/CYPB. Post-translationally, phosphorylation at Thr-279 is required for the formation of the nucleocapsid.

The protein resides in the virion. It localises to the host cytoplasm. The protein localises to the host nucleus. Its function is as follows. Forms the helical nucleocapsid (NC) in a ratio of 1 N per 6 ribonucleotides, protecting the genome from nucleases. The nucleocapsid (NC) has a helical structure with either 12.35 or 11.64 N per turn, approximately 20 nm in diameter, with a hollow central cavity approximately 5 nm in diameter. The encapsidated genomic RNA serves as template for transcription and replication; encapsidation by N is coupled to RNA synthesis. Forms the encapsidation complex with the phosphoprotein protein P. Before encapsidation, the newly synthesized free N protein, so-called N0, is chaperoned by P. Participates, together with P, in the formation of viral factories (viroplasms), which are large inclusions in the host cytoplasm where replication takes place. N is released in the blood following lysis of measles infected cells, it interacts then with human FCGR2B on immune cells, inducing apoptosis and blocking inflammatory immune response. The polypeptide is Nucleoprotein (N) (Measles virus (strain Edmonston) (MeV)).